A 166-amino-acid polypeptide reads, in one-letter code: Large ribosomal subunit protein uL10 (166 aa).

It belongs to the universal ribosomal protein uL10 family. As to quaternary structure, part of the ribosomal stalk of the 50S ribosomal subunit. The N-terminus interacts with L11 and the large rRNA to form the base of the stalk. The C-terminus forms an elongated spine to which L12 dimers bind in a sequential fashion forming a multimeric L10(L12)X complex.

Functionally, forms part of the ribosomal stalk, playing a central role in the interaction of the ribosome with GTP-bound translation factors. The polypeptide is Large ribosomal subunit protein uL10 (Pelagibacter ubique (strain HTCC1062)).